Here is a 104-residue protein sequence, read N- to C-terminus: Interferon alpha-inducible protein 27-like protein 1 (104 aa).

3 helical membrane-spanning segments follow: residues 14-34 (VAAVVGGVVAVGTVLVALSAM), 59-79 (GGGVAAGSLVAILQSVGAAGL), and 81-101 (VTSKVIGGFAGTALGAWLGSP).

Belongs to the IFI6/IFI27 family.

It is found in the membrane. Functionally, plays a role in the apoptotic process and has a pro-apoptotic activity. This chain is Interferon alpha-inducible protein 27-like protein 1, found in Homo sapiens (Human).